Reading from the N-terminus, the 53-residue chain is ATP synthase protein 8 (53 aa).

The chain crosses the membrane as a helical span at residues 5 to 25 (APISWLTLFFVFSITLVIFNI).

This sequence belongs to the ATPase protein 8 family. F-type ATPases have 2 components, CF(1) - the catalytic core - and CF(0) - the membrane proton channel.

It is found in the mitochondrion membrane. Mitochondrial membrane ATP synthase (F(1)F(O) ATP synthase or Complex V) produces ATP from ADP in the presence of a proton gradient across the membrane which is generated by electron transport complexes of the respiratory chain. F-type ATPases consist of two structural domains, F(1) - containing the extramembraneous catalytic core and F(0) - containing the membrane proton channel, linked together by a central stalk and a peripheral stalk. During catalysis, ATP synthesis in the catalytic domain of F(1) is coupled via a rotary mechanism of the central stalk subunits to proton translocation. Part of the complex F(0) domain. Minor subunit located with subunit a in the membrane. This Aedes aegypti (Yellowfever mosquito) protein is ATP synthase protein 8.